A 643-amino-acid chain; its full sequence is Melanoma-associated antigen C3 (643 aa).

2 MAGE domains span residues Leu184–Met384 and Leu456–Glu643. The segment at Asn347–Ser421 is disordered. A compositionally biased stretch (basic and acidic residues) spans His354–Leu363. A compositionally biased stretch (pro residues) spans Gly383–Ser414. Thr478, Thr484, and Thr485 each carry phosphothreonine.

As to expression, expressed in testis. Not expressed in other normal tissues, but is expressed in tumors of different histological origins.

The chain is Melanoma-associated antigen C3 (MAGEC3) from Homo sapiens (Human).